The following is a 182-amino-acid chain: Endoribonuclease YbeY (182 aa).

Positions 115, 119, and 125 each coordinate Zn(2+).

It belongs to the endoribonuclease YbeY family. The cofactor is Zn(2+).

The protein localises to the cytoplasm. Single strand-specific metallo-endoribonuclease involved in late-stage 70S ribosome quality control and in maturation of the 3' terminus of the 16S rRNA. The sequence is that of Endoribonuclease YbeY from Bifidobacterium longum (strain NCC 2705).